Consider the following 184-residue polypeptide: Probable chemoreceptor glutamine deamidase CheD (184 aa).

It belongs to the CheD family.

It carries out the reaction L-glutaminyl-[protein] + H2O = L-glutamyl-[protein] + NH4(+). In terms of biological role, probably deamidates glutamine residues to glutamate on methyl-accepting chemotaxis receptors (MCPs), playing an important role in chemotaxis. In Rhizobium rhizogenes (strain K84 / ATCC BAA-868) (Agrobacterium radiobacter), this protein is Probable chemoreceptor glutamine deamidase CheD.